The sequence spans 568 residues: Periplasmic trehalase (568 aa).

The signal sequence occupies residues Met1–Ala38. Substrate is bound by residues Arg169, Trp176 to Asp177, Asn213, Arg222 to Gln224, Arg294 to Glu296, and Gly327. Catalysis depends on proton donor/acceptor residues Asp329 and Glu511. Glu526 contacts substrate.

Belongs to the glycosyl hydrolase 37 family.

It localises to the periplasm. The enzyme catalyses alpha,alpha-trehalose + H2O = alpha-D-glucose + beta-D-glucose. In terms of biological role, provides the cells with the ability to utilize trehalose at high osmolarity by splitting it into glucose molecules that can subsequently be taken up by the phosphotransferase-mediated uptake system. The sequence is that of Periplasmic trehalase from Xanthomonas campestris pv. campestris (strain 8004).